The sequence spans 749 residues: Catalase-peroxidase (749 aa).

Residues 1–12 are compositionally biased toward basic and acidic residues; sequence MSSDTSDTRPPH. A disordered region spans residues 1-40; it reads MSSDTSDTRPPHSDSGTQSNSESENPIIDSPEPKAHAPLT. The segment covering 14–24 has biased composition (polar residues); sequence DSGTQSNSESE. Residues 113-240 constitute a cross-link (tryptophyl-tyrosyl-methioninium (Trp-Tyr) (with M-266)); that stretch reads WHAAGTYRIF…FGATTMGLIY (128 aa). H114 serves as the catalytic Proton acceptor. The tryptophyl-tyrosyl-methioninium (Tyr-Met) (with W-113) cross-link spans 240 to 266; sequence YVNPEGPEGKPDPLAAAHDIRETFGRM. H281 is a binding site for heme b.

It belongs to the peroxidase family. Peroxidase/catalase subfamily. As to quaternary structure, homodimer or homotetramer. Requires heme b as cofactor. Post-translationally, formation of the three residue Trp-Tyr-Met cross-link is important for the catalase, but not the peroxidase activity of the enzyme.

The catalysed reaction is H2O2 + AH2 = A + 2 H2O. It carries out the reaction 2 H2O2 = O2 + 2 H2O. In terms of biological role, bifunctional enzyme with both catalase and broad-spectrum peroxidase activity. This is Catalase-peroxidase from Mycobacterium sp. (strain JLS).